The following is a 116-amino-acid chain: Aspartate 1-decarboxylase (116 aa).

Serine 25 serves as the catalytic Schiff-base intermediate with substrate; via pyruvic acid. Residue serine 25 is modified to Pyruvic acid (Ser). Residue threonine 57 coordinates substrate. The Proton donor role is filled by tyrosine 58. A substrate-binding site is contributed by glycine 73–alanine 75.

Belongs to the PanD family. Heterooctamer of four alpha and four beta subunits. It depends on pyruvate as a cofactor. Is synthesized initially as an inactive proenzyme, which is activated by self-cleavage at a specific serine bond to produce a beta-subunit with a hydroxyl group at its C-terminus and an alpha-subunit with a pyruvoyl group at its N-terminus.

It localises to the cytoplasm. The catalysed reaction is L-aspartate + H(+) = beta-alanine + CO2. It participates in cofactor biosynthesis; (R)-pantothenate biosynthesis; beta-alanine from L-aspartate: step 1/1. Catalyzes the pyruvoyl-dependent decarboxylation of aspartate to produce beta-alanine. The chain is Aspartate 1-decarboxylase from Leptospira borgpetersenii serovar Hardjo-bovis (strain JB197).